The chain runs to 279 residues: Putative pyruvate, phosphate dikinase regulatory protein (279 aa).

153-160 contacts ADP; that stretch reads GISRTSKT.

The protein belongs to the pyruvate, phosphate/water dikinase regulatory protein family. PDRP subfamily.

The enzyme catalyses N(tele)-phospho-L-histidyl/L-threonyl-[pyruvate, phosphate dikinase] + ADP = N(tele)-phospho-L-histidyl/O-phospho-L-threonyl-[pyruvate, phosphate dikinase] + AMP + H(+). It carries out the reaction N(tele)-phospho-L-histidyl/O-phospho-L-threonyl-[pyruvate, phosphate dikinase] + phosphate + H(+) = N(tele)-phospho-L-histidyl/L-threonyl-[pyruvate, phosphate dikinase] + diphosphate. Bifunctional serine/threonine kinase and phosphorylase involved in the regulation of the pyruvate, phosphate dikinase (PPDK) by catalyzing its phosphorylation/dephosphorylation. This Brucella abortus (strain 2308) protein is Putative pyruvate, phosphate dikinase regulatory protein.